The sequence spans 341 residues: DNA-directed RNA polymerase subunit alpha (341 aa).

Residues 1–233 (MVREEVPVST…DLFIPFLHAE (233 aa)) form an alpha N-terminal domain (alpha-NTD) region. The alpha C-terminal domain (alpha-CTD) stretch occupies residues 266–341 (IILKRIFIDQ…LKNSNQFESR (76 aa)).

It belongs to the RNA polymerase alpha chain family. In plastids the minimal PEP RNA polymerase catalytic core is composed of four subunits: alpha, beta, beta', and beta''. When a (nuclear-encoded) sigma factor is associated with the core the holoenzyme is formed, which can initiate transcription.

It is found in the plastid. The protein resides in the chloroplast. The catalysed reaction is RNA(n) + a ribonucleoside 5'-triphosphate = RNA(n+1) + diphosphate. Functionally, DNA-dependent RNA polymerase catalyzes the transcription of DNA into RNA using the four ribonucleoside triphosphates as substrates. The protein is DNA-directed RNA polymerase subunit alpha of Nymphaea alba (White water-lily).